The sequence spans 78 residues: Magnetosome protein MamL (78 aa).

The N-terminal stretch at 1-22 is a signal peptide; it reads MVRVIGSLVFGGLILLLASSNA. At 23-38 the chain is on the lumenal side; it reads HMVETRFGPLIMLAPH. Residues 39–59 form a helical membrane-spanning segment; it reads FVVLGITFFLGFAIGIVLVFA. Residues 60 to 78 lie on the Cytoplasmic side of the membrane; that stretch reads NVMKRRKHKLPGKNIVIKR.

The protein belongs to the magnetosome MamL family.

The protein localises to the magnetosome membrane. Functionally, involved in magnetite crystal maturation, but not in magnetosome vesicle tubulation or formation. One of 7 genes (mamLQBIEMO) able to induce magnetosome membrane biogenesis; coexpression of mamLQRBIEMO in a deletion of the 17 gene mamAB operon restores magnetosome vesicle formation but not magnetite biosynthesis. The chain is Magnetosome protein MamL from Magnetospirillum gryphiswaldense (strain DSM 6361 / JCM 21280 / NBRC 15271 / MSR-1).